A 366-amino-acid chain; its full sequence is Mitochondrial carrier protein MTM1 (366 aa).

3 Solcar repeats span residues 14 to 149, 156 to 250, and 266 to 359; these read ERML…IRDV, YPTL…CKER, and VHFI…SKKV. A run of 6 helical transmembrane segments spans residues 17-36, 126-146, 162-182, 229-249, 268-286, and 331-352; these read LSAG…MDVV, SLTL…YEYI, LFCG…LELV, TLWR…LCKE, FINS…AICT, and LYTG…MISS.

This sequence belongs to the mitochondrial carrier (TC 2.A.29) family.

Its subcellular location is the mitochondrion inner membrane. Its function is as follows. Involved in the mitochondrial activation of SOD2 by specifically facilitating insertion of the essential manganese cofactor. Has the ability to activate iron regulon in an iron-dependent manner. Responds to calorie restriction (CR) strength. This is Mitochondrial carrier protein MTM1 (MTM1) from Saccharomyces cerevisiae (strain ATCC 204508 / S288c) (Baker's yeast).